Reading from the N-terminus, the 470-residue chain is Neuraminidase (470 aa).

The Intravirion portion of the chain corresponds to 1-14; sequence MNPNQKIITIGSVS. Positions 11–32 are involved in apical transport and lipid raft association; that stretch reads GSVSLGLVVLNILLHIVSITIT. A helical transmembrane segment spans residues 15-35; sequence LGLVVLNILLHIVSITITVLV. The hypervariable stalk region stretch occupies residues 32–86; it reads TVLVLPGNGNNGSCNGTVIREYNETVRIEKVTQWHNTNVIEYIERSESDHFMNNT. The Virion surface portion of the chain corresponds to 36-470; it reads LPGNGNNGSC…AILPFDIDKM (435 aa). 4 N-linked (GlcNAc...) asparagine; by host glycosylation sites follow: Asn-42, Asn-46, Asn-54, and Asn-84. The interval 89 to 470 is head of neuraminidase; that stretch reads LCDAKGFAPF…AILPFDIDKM (382 aa). Intrachain disulfides connect Cys-90-Cys-417, Cys-122-Cys-127, Cys-182-Cys-229, Cys-231-Cys-236, Cys-277-Cys-290, Cys-279-Cys-288, Cys-316-Cys-335, and Cys-421-Cys-446. Arg-116 is a substrate binding site. N-linked (GlcNAc...) asparagine; by host glycosylation occurs at Asn-144. Catalysis depends on Asp-149, which acts as the Proton donor/acceptor. Substrate is bound at residue Arg-150. 275 to 276 is a binding site for substrate; sequence EE. Arg-291 is a substrate binding site. Residue Asp-292 participates in Ca(2+) binding. An N-linked (GlcNAc...) asparagine; by host glycan is attached at Asn-293. Residues Gly-296 and Asp-322 each coordinate Ca(2+). Arg-368 is a substrate binding site. An N-linked (GlcNAc...) asparagine; by host glycan is attached at Asn-398. The Nucleophile role is filled by Tyr-402.

It belongs to the glycosyl hydrolase 34 family. In terms of assembly, homotetramer. It depends on Ca(2+) as a cofactor. N-glycosylated.

The protein resides in the virion membrane. It localises to the host apical cell membrane. The catalysed reaction is Hydrolysis of alpha-(2-&gt;3)-, alpha-(2-&gt;6)-, alpha-(2-&gt;8)- glycosidic linkages of terminal sialic acid residues in oligosaccharides, glycoproteins, glycolipids, colominic acid and synthetic substrates.. With respect to regulation, inhibited by the neuraminidase inhibitors zanamivir (Relenza) and oseltamivir (Tamiflu). These drugs interfere with the release of progeny virus from infected cells and are effective against all influenza strains. Resistance to neuraminidase inhibitors is quite rare. Its function is as follows. Catalyzes the removal of terminal sialic acid residues from viral and cellular glycoconjugates. Cleaves off the terminal sialic acids on the glycosylated HA during virus budding to facilitate virus release. Additionally helps virus spread through the circulation by further removing sialic acids from the cell surface. These cleavages prevent self-aggregation and ensure the efficient spread of the progeny virus from cell to cell. Otherwise, infection would be limited to one round of replication. Described as a receptor-destroying enzyme because it cleaves a terminal sialic acid from the cellular receptors. May facilitate viral invasion of the upper airways by cleaving the sialic acid moieties on the mucin of the airway epithelial cells. Likely to plays a role in the budding process through its association with lipid rafts during intracellular transport. May additionally display a raft-association independent effect on budding. Plays a role in the determination of host range restriction on replication and virulence. Sialidase activity in late endosome/lysosome traffic seems to enhance virus replication. The sequence is that of Neuraminidase from Aves (Horse).